The chain runs to 221 residues: Ribonuclease S-2 (221 aa).

The first 20 residues, 1–20 (MIYIFTMVFSLNVLILSSSA), serve as a signal peptide directing secretion. An RNA-binding site is contributed by Gln-31. Cysteines 37 and 44 form a disulfide. RNA-binding positions include His-55, 91–92 (NV), Phe-101, 104–105 (KQ), and 108–109 (KH). His-55 (proton donor) is an active-site residue. Cys-70 and Cys-112 are disulfide-bonded. The N-linked (GlcNAc...) asparagine glycan is linked to Asn-91. The active site involves Gln-105. His-109 functions as the Proton acceptor in the catalytic mechanism. N-linked (GlcNAc...) asparagine glycans are attached at residues Asn-137, Asn-153, and Asn-195. Intrachain disulfides connect Cys-176–Cys-214 and Cys-191–Cys-202.

The protein belongs to the RNase T2 family. Post-translationally, N-linked core structure at Asn-91, Asn-137, and Asn-153 contains xylose and at Asn-195 contains xylose and fucose.

The protein resides in the secreted. It localises to the extracellular space. It catalyses the reaction a ribonucleotidyl-ribonucleotide-RNA + H2O = a 3'-end 3'-phospho-ribonucleotide-RNA + a 5'-end dephospho-ribonucleoside-RNA + H(+). Functionally, self-incompatibility (SI) is the inherited ability of a flowering plant to prevent self-fertilization by discriminating between self and non-self pollen during pollination. In many species, self-incompatibility is controlled by the single, multiallelic locus S. The sequence is that of Ribonuclease S-2 from Pyrus pyrifolia (Chinese pear).